We begin with the raw amino-acid sequence, 265 residues long: Indole-3-glycerol phosphate synthase (265 aa).

The protein belongs to the TrpC family.

The catalysed reaction is 1-(2-carboxyphenylamino)-1-deoxy-D-ribulose 5-phosphate + H(+) = (1S,2R)-1-C-(indol-3-yl)glycerol 3-phosphate + CO2 + H2O. The protein operates within amino-acid biosynthesis; L-tryptophan biosynthesis; L-tryptophan from chorismate: step 4/5. The protein is Indole-3-glycerol phosphate synthase of Xanthomonas oryzae pv. oryzae (strain MAFF 311018).